The chain runs to 423 residues: Tubulin beta-2 chain (423 aa).

Glutamate 44, serine 113, glycine 117, threonine 118, glycine 119, asparagine 179, and asparagine 201 together coordinate GTP. Position 44 (glutamate 44) interacts with Mg(2+). A disordered region spans residues 394–423 (VSEYQQYQDATAEEEGEYDEDEDDEGGDYA). Residues 404 to 423 (TAEEEGEYDEDEDDEGGDYA) show a composition bias toward acidic residues.

This sequence belongs to the tubulin family. In terms of assembly, dimer of alpha and beta chains. A typical microtubule is a hollow water-filled tube with an outer diameter of 25 nm and an inner diameter of 15 nM. Alpha-beta heterodimers associate head-to-tail to form protofilaments running lengthwise along the microtubule wall with the beta-tubulin subunit facing the microtubule plus end conferring a structural polarity. Microtubules usually have 13 protofilaments but different protofilament numbers can be found in some organisms and specialized cells. The cofactor is Mg(2+).

It localises to the cytoplasm. Its subcellular location is the cytoskeleton. Tubulin is the major constituent of microtubules, a cylinder consisting of laterally associated linear protofilaments composed of alpha- and beta-tubulin heterodimers. Microtubules grow by the addition of GTP-tubulin dimers to the microtubule end, where a stabilizing cap forms. Below the cap, tubulin dimers are in GDP-bound state, owing to GTPase activity of alpha-tubulin. This is Tubulin beta-2 chain (TUBB2) from Oomycete-like sp. (strain MacKay2000).